The following is a 542-amino-acid chain: Chaperonin GroEL 4 (542 aa).

Residues 30-33 (TLGP), K51, 87-91 (DGTTT), G415, and D496 each bind ATP.

The protein belongs to the chaperonin (HSP60) family. In terms of assembly, forms a cylinder of 14 subunits composed of two heptameric rings stacked back-to-back. Interacts with the co-chaperonin GroES.

The protein localises to the cytoplasm. It catalyses the reaction ATP + H2O + a folded polypeptide = ADP + phosphate + an unfolded polypeptide.. Together with its co-chaperonin GroES, plays an essential role in assisting protein folding. The GroEL-GroES system forms a nano-cage that allows encapsulation of the non-native substrate proteins and provides a physical environment optimized to promote and accelerate protein folding. The protein is Chaperonin GroEL 4 of Rhizobium etli (strain ATCC 51251 / DSM 11541 / JCM 21823 / NBRC 15573 / CFN 42).